The following is a 514-amino-acid chain: Carboxysome shell carbonic anhydrase (514 aa).

Positions 1–144 (MNTRNTRSKQ…LTAATEQFSR (144 aa)) are N-terminal domain. Residues 151 to 397 (DDSASAIGFF…GRYPPNDIGH (247 aa)) form a catalytic domain region. C173 is a binding site for Zn(2+). D175 acts as the Proton acceptor in catalysis. Zn(2+) contacts are provided by H242 and C253. Residues 398-514 (AERYISVGDG…GSPIEEVASA (117 aa)) are C-terminal domain.

This sequence belongs to the beta-class carbonic anhydrase family. CsoSCA subfamily. As to quaternary structure, homodimer, may form filaments. It depends on Zn(2+) as a cofactor.

Its subcellular location is the carboxysome. It carries out the reaction hydrogencarbonate + H(+) = CO2 + H2O. Carbonic anhydrase activity is inhibited by ethoxyzolamide, dithiothreitol, cyanide, and divalent metal chelators dipicolinic acid and nitrilotriacetic acid. Its function is as follows. Reversible hydration of carbon dioxide. Essential for chemolithotrophic carbon dioxide fixation, supplies CO(2) to RuBisCO (ribulose bisphosphate carboxylase, cbbL-cbbS) in the carboxysome. There are estimated to be 40 CsoSCA dimers per carboxysome. In terms of biological role, unlike beta-carboxysomes, alpha-carboxysomes (Cb) can form without cargo protein. CsoS2 is essential for Cb formation and is also capable of targeting foreign proteins to the Cb. The Cb shell assembles with the aid of CsoS2; CsoS1A, CsoS1B and CsoS1C form the majority of the shell while CsoS4A and CsoS4B form vertices. CsoS1D forms pseudohexamers that probably control metabolite flux into and out of the shell. This Halothiobacillus neapolitanus (strain ATCC 23641 / c2) (Thiobacillus neapolitanus) protein is Carboxysome shell carbonic anhydrase.